The chain runs to 118 residues: UPF0102 protein Lxx14785 (118 aa).

Belongs to the UPF0102 family.

This is UPF0102 protein Lxx14785 from Leifsonia xyli subsp. xyli (strain CTCB07).